Reading from the N-terminus, the 424-residue chain is Serpin E3 (424 aa).

The signal sequence occupies residues 1–20; the sequence is MPPFLITLFLFHSCCLRANG. The N-linked (GlcNAc...) asparagine glycan is linked to Asn-46. A disordered region spans residues 143 to 174; the sequence is DLSEPNSTAIQTSEGASRETAGGGPSEGPGGW. Polar residues predominate over residues 146–157; the sequence is EPNSTAIQTSEG. The span at 163-173 shows a compositional bias: gly residues; it reads AGGGPSEGPGG.

The protein belongs to the serpin family.

Its subcellular location is the secreted. Its function is as follows. Probable serine protease inhibitor. The polypeptide is Serpin E3 (SERPINE3) (Homo sapiens (Human)).